The chain runs to 198 residues: Large ribosomal subunit protein eL19 (198 aa).

2 disordered regions span residues 66 to 85 and 150 to 177; these read YEEA…RGTA and KRAK…EERQ. Residues 71 to 83 are compositionally biased toward basic residues; that stretch reads RKGRHTGYGKRRG. The segment covering 160-177 has biased composition (basic and acidic residues); the sequence is QARRDKNKESRKRREERQ.

It belongs to the eukaryotic ribosomal protein eL19 family.

In Caenorhabditis elegans, this protein is Large ribosomal subunit protein eL19 (rpl-19).